The chain runs to 156 residues: Small ribosomal subunit protein bS6 (156 aa).

Residues 95 to 156 (AITETSPLAK…DRDEQSEDSE (62 aa)) are disordered. Basic and acidic residues predominate over residues 117 to 126 (RSGRDRDESG).

The protein belongs to the bacterial ribosomal protein bS6 family.

Its function is as follows. Binds together with bS18 to 16S ribosomal RNA. This Nitrosococcus oceani (strain ATCC 19707 / BCRC 17464 / JCM 30415 / NCIMB 11848 / C-107) protein is Small ribosomal subunit protein bS6.